We begin with the raw amino-acid sequence, 346 residues long: MKFIQNNREATALLAIVCLFVFPGALDSQYLSVQTLTMVFSSAQILMLLAIGATMVMLTRNIDVSVGSTTGMCAVLLGVMLNAGYSLPVACLATLILGIVAGFFNGVLVAWLKIPAIVATLGTLGLYRGIMLLWTGGKWIEGLPAGLKQLSAPVFLGISAIGWFTLVLALLMAWLLAKTAFGRNFYATGDNLQGARQLGVRTEMVRIMAFSLNGGMAALAGIVFASQIGFIPNQTGTGLEMKAIAACVLGGISLLGGSGTVIGAILGAYFLTQIDSVLVLLRIPAWWNDFIAGLVLLGVLVFDGRLRCALQRNLRRQKYARFISPPTPLQAEAKTHAQQNKNKEVA.

The next 9 membrane-spanning stretches (helical) occupy residues 13-33 (LLAIVCLFVFPGALDSQYLSV), 38-58 (MVFSSAQILMLLAIGATMVML), 71-91 (GMCAVLLGVMLNAGYSLPVAC), 92-112 (LATLILGIVAGFFNGVLVAWL), 114-134 (IPAIVATLGTLGLYRGIMLLW), 154-174 (VFLGISAIGWFTLVLALLMAW), 212-232 (LNGGMAALAGIVFASQIGFIP), 248-268 (VLGGISLLGGSGTVIGAILGA), and 283-303 (IPAWWNDFIAGLVLLGVLVFD).

Belongs to the binding-protein-dependent transport system permease family. AraH/RbsC subfamily. As to quaternary structure, the complex is composed of two ATP-binding proteins (LsrA), two transmembrane proteins (LsrC and LsrD) and a solute-binding protein (LsrB).

It localises to the cell inner membrane. In terms of biological role, part of the ABC transporter complex LsrABCD involved in autoinducer 2 (AI-2) import. Probably responsible for the translocation of the substrate across the membrane. The chain is Autoinducer 2 import system permease protein LsrC (lsrC) from Salmonella paratyphi B (strain ATCC BAA-1250 / SPB7).